We begin with the raw amino-acid sequence, 199 residues long: uncharacterized protein (199 aa).

The next 4 membrane-spanning stretches (helical) occupy residues 41–61 (LFIPPSACRIDLSVFPWAFIC), 72–92 (SLICSPCFSTVWVSLLICSPW), 109–129 (TVWVNLLICSPWAAKVVSIFV), and 145–165 (VTYSVFTGITGLLSLNCLLNL).

To M.pneumoniae MPN_037.

It is found in the cell membrane. This is an uncharacterized protein from Mycoplasma pneumoniae (strain ATCC 29342 / M129 / Subtype 1) (Mycoplasmoides pneumoniae).